Here is a 433-residue protein sequence, read N- to C-terminus: Keratin, type I cytoskeletal 17 (433 aa).

The disordered stretch occupies residues 1-24 (MTTTIRQFTSSSSIKGSSGLGGGS). Residues 1-83 (MTTTIRQFTS…GGVDGLLAGG (83 aa)) are head. Residues serine 12 and serine 13 each carry the phosphoserine modification. A Glycyl lysine isopeptide (Lys-Gly) (interchain with G-Cter in SUMO1); alternate cross-link involves residue lysine 15. A Glycyl lysine isopeptide (Lys-Gly) (interchain with G-Cter in SUMO2); alternate cross-link involves residue lysine 15. A phosphoserine mark is found at serine 25, serine 32, serine 34, and serine 39. Serine 44 carries the phosphoserine; by RPS6KA1 modification. Residues 84 to 120 (EKATMQNLNDRLASYLDKVRALEEANTELEVKIRDWY) form a coil 1A region. Residues 84–395 (EKATMQNLND…RLLEGEDAHL (312 aa)) form the IF rod domain. Threonine 110 carries the phosphothreonine modification. The interval 121 to 138 (QKQAPGPARDYSAYYHTI) is linker 1. The tract at residues 139-230 (EDLKNKILVA…NHEEEMNALR (92 aa)) is coil 1B. Residues 231–250 (GQVGGEINVEMDAAPGVDLS) form a linker 12 region. The tract at residues 251–392 (RILSEMRDQY…TYRRLLEGED (142 aa)) is coil 2. A Glycyl lysine isopeptide (Lys-Gly) (interchain with G-Cter in SUMO2) cross-link involves residue lysine 278. Threonine 279 carries the phosphothreonine modification. Phosphoserine is present on serine 323. A tail region spans residues 393 to 433 (AHLTQYKPKEPVTTRQVRTIVEEVQDGKVISSREQVHQTTR). Residues lysine 399, lysine 401, and lysine 420 each participate in a glycyl lysine isopeptide (Lys-Gly) (interchain with G-Cter in SUMO1); alternate cross-link. Glycyl lysine isopeptide (Lys-Gly) (interchain with G-Cter in SUMO2); alternate cross-links involve residues lysine 399, lysine 401, and lysine 420.

This sequence belongs to the intermediate filament family. In terms of assembly, heterodimer of a type I and a type II keratin. KRT17 associates with KRT6 isomers (KRT6A or KRT6B). Interacts with TRADD and SFN. Phosphorylation at Ser-44 occurs in a growth- and stress-dependent fashion in skin keratinocytes, it has no effect on filament organization. In terms of tissue distribution, expressed strongly in outer root sheath and medulla region of hair follicle and in the early differentiating epithelial cells (trichocytes) within the hair bulb region. Weak expression in the matrix cells of hair bulb. Also present in the sweat gland within the skin, vibrissae follicle, salivary gland, tooth and thymus.

It localises to the cytoplasm. In terms of biological role, type I keratin involved in the formation and maintenance of various skin appendages, specifically in determining shape and orientation of hair. Required for the correct growth of hair follicles, in particular for the persistence of the anagen (growth) state. Modulates the function of TNF-alpha in the specific context of hair cycling. Regulates protein synthesis and epithelial cell growth through binding to the adapter protein SFN and by stimulating Akt/mTOR pathway. Involved in tissue repair. May be a marker of basal cell differentiation in complex epithelia and therefore indicative of a certain type of epithelial 'stem cells'. Acts as a promoter of epithelial proliferation by acting a regulator of immune response in skin: promotes Th1/Th17-dominated immune environment contributing to the development of basaloid skin tumors. May act as an autoantigen in the immunopathogenesis of psoriasis, with certain peptide regions being a major target for autoreactive T-cells and hence causing their proliferation. This chain is Keratin, type I cytoskeletal 17 (Krt17), found in Mus musculus (Mouse).